The chain runs to 316 residues: Arginine transport system permease protein ArgU (316 aa).

Residues 1-14 (MSDLNQGPGASTAQ) show a composition bias toward polar residues. The interval 1–20 (MSDLNQGPGASTAQPKPIEA) is disordered. 6 consecutive transmembrane segments (helical) span residues 29-49 (WVAA…ALNN), 74-94 (IALT…LAVM), 108-128 (LYLW…WGLL), 151-171 (MFLL…AEIV), 217-237 (LISM…LELY), and 251-271 (VPML…LMVG). Positions 70 to 274 (ALHTIALTLL…TSILMVGQYY (205 aa)) constitute an ABC transmembrane type-1 domain.

It belongs to the binding-protein-dependent transport system permease family. The complex is probably composed of two ATP-binding proteins (ArgV), two transmembrane proteins (ArgU) and a solute-binding protein (ArgT).

It localises to the cell membrane. Part of the ABC transporter complex ArgTUV involved in L-arginine import. May also transport L-citrulline. Probably responsible for the translocation of the substrate across the membrane. The chain is Arginine transport system permease protein ArgU from Corynebacterium glutamicum (strain ATCC 13032 / DSM 20300 / JCM 1318 / BCRC 11384 / CCUG 27702 / LMG 3730 / NBRC 12168 / NCIMB 10025 / NRRL B-2784 / 534).